A 305-amino-acid polypeptide reads, in one-letter code: UDP-3-O-acyl-N-acetylglucosamine deacetylase (305 aa).

Histidine 78, histidine 237, and aspartate 241 together coordinate Zn(2+). Residue histidine 264 is the Proton donor of the active site.

Belongs to the LpxC family. The cofactor is Zn(2+).

The catalysed reaction is a UDP-3-O-[(3R)-3-hydroxyacyl]-N-acetyl-alpha-D-glucosamine + H2O = a UDP-3-O-[(3R)-3-hydroxyacyl]-alpha-D-glucosamine + acetate. It functions in the pathway glycolipid biosynthesis; lipid IV(A) biosynthesis; lipid IV(A) from (3R)-3-hydroxytetradecanoyl-[acyl-carrier-protein] and UDP-N-acetyl-alpha-D-glucosamine: step 2/6. Functionally, catalyzes the hydrolysis of UDP-3-O-myristoyl-N-acetylglucosamine to form UDP-3-O-myristoylglucosamine and acetate, the committed step in lipid A biosynthesis. The sequence is that of UDP-3-O-acyl-N-acetylglucosamine deacetylase from Burkholderia cenocepacia (strain ATCC BAA-245 / DSM 16553 / LMG 16656 / NCTC 13227 / J2315 / CF5610) (Burkholderia cepacia (strain J2315)).